Reading from the N-terminus, the 442-residue chain is Histidinol dehydrogenase (442 aa).

3 residues coordinate NAD(+): Y138, Q199, and N222. Substrate-binding residues include S245, Q267, and H270. Q267 and H270 together coordinate Zn(2+). Residues E335 and H336 each act as proton acceptor in the active site. Substrate is bound by residues H336, D369, E423, and H428. D369 is a Zn(2+) binding site. H428 contacts Zn(2+).

It belongs to the histidinol dehydrogenase family. It depends on Zn(2+) as a cofactor.

The catalysed reaction is L-histidinol + 2 NAD(+) + H2O = L-histidine + 2 NADH + 3 H(+). The protein operates within amino-acid biosynthesis; L-histidine biosynthesis; L-histidine from 5-phospho-alpha-D-ribose 1-diphosphate: step 9/9. Catalyzes the sequential NAD-dependent oxidations of L-histidinol to L-histidinaldehyde and then to L-histidine. This is Histidinol dehydrogenase from Ralstonia nicotianae (strain ATCC BAA-1114 / GMI1000) (Ralstonia solanacearum).